We begin with the raw amino-acid sequence, 254 residues long: GTP cyclohydrolase III (254 aa).

It belongs to the archaeal-type GTP cyclohydrolase family.

It carries out the reaction GTP + 3 H2O = 2-amino-5-formylamino-6-(5-phospho-D-ribosylamino)pyrimidin-4(3H)-one + 2 phosphate + 2 H(+). In terms of biological role, catalyzes the formation of 2-amino-5-formylamino-6-ribofuranosylamino-4(3H)-pyrimidinone ribonucleotide monophosphate and inorganic phosphate from GTP. Also has an independent pyrophosphate phosphohydrolase activity. This chain is GTP cyclohydrolase III, found in Methanobrevibacter smithii (strain ATCC 35061 / DSM 861 / OCM 144 / PS).